A 395-amino-acid polypeptide reads, in one-letter code: Synaptotagmin-8 (395 aa).

At 1–44 the chain is on the extracellular side; sequence MQADRSMKMGHALNPFSTSAPLDATAGPSLIPDLITRIPWPRWT. The chain crosses the membrane as a helical; Signal-anchor for type III membrane protein span at residues 45–65; that stretch reads LFIAILAAGVLLVSCLLCVIC. Over 66 to 395 the chain is Cytoplasmic; that stretch reads CYCHRHRHRK…PRLPLLRPRS (330 aa). 2 consecutive C2 domains span residues 113-229 and 241-370; these read QWGR…ESWY and QMGE…AQWH.

Belongs to the synaptotagmin family. Homodimer or homooligomer. Homodimerization and homooligomerization do not depend on Ca(2+). Interacts with SYNCRIP isoform 2 C-terminus. Binds inositol 1,3,4,5-tetrakisphosphate (IP4). Binds to AP2 in a Ca(2+)-independent manner. Interacts with STX1A, STX1B and STX2; the interaction is Ca(2+)-dependent. Ubiquitous. Detected in testis and brain. Expressed in primary neurons, neuroendocrine and endocrine cells.

It localises to the cytoplasm. The protein localises to the cell membrane. Its subcellular location is the cytoplasmic vesicle. It is found in the secretory vesicle. The protein resides in the acrosome. In terms of biological role, involved in the trafficking and exocytosis of secretory vesicles in non-neuronal tissues. Mediates Ca(2+)-regulation of exocytosis acrosomal reaction in sperm. May mediate Ca(2+)-regulation of exocytosis in insulin secreted cells. The polypeptide is Synaptotagmin-8 (Syt8) (Mus musculus (Mouse)).